A 229-amino-acid polypeptide reads, in one-letter code: Casparian strip membrane protein 1 (229 aa).

At 1–67 the chain is on the cytoplasmic side; that stretch reads MSTSEAGAAA…FRRADRGSRC (67 aa). Residues 68-88 traverse the membrane as a helical segment; it reads VALLDFVLRVAAFGPALAAAI. Topologically, residues 89 to 115 are extracellular; the sequence is ATGTSDETLSVFTQFFQFHARFDDFPA. A helical membrane pass occupies residues 116–136; the sequence is LLFFMVANAIAAGYLVLSLPF. At 137–157 the chain is on the cytoplasmic side; it reads SAVIVLRPQAIGLRHLLLVCD. Residues 158–178 form a helical membrane-spanning segment; the sequence is MIIAALLTAAAAAAAAIVDLA. Over 179-205 the chain is Extracellular; the sequence is HSGNLRANWVPICMQFHGFCQRTSGAV. Residues 206–226 traverse the membrane as a helical segment; the sequence is VGSFLAVLVLLFLVILAAFAI. Residues 227–229 are Cytoplasmic-facing; sequence RKR.

The protein belongs to the Casparian strip membrane proteins (CASP) family. As to quaternary structure, homodimer and heterodimers.

The protein resides in the cell membrane. Regulates membrane-cell wall junctions and localized cell wall deposition. Required for establishment of the Casparian strip membrane domain (CSD) and the subsequent formation of Casparian strips, a cell wall modification of the root endodermis that determines an apoplastic barrier between the intraorganismal apoplasm and the extraorganismal apoplasm and prevents lateral diffusion. The protein is Casparian strip membrane protein 1 of Sorghum bicolor (Sorghum).